Here is a 495-residue protein sequence, read N- to C-terminus: Lysine--tRNA ligase (495 aa).

Mg(2+) is bound by residues glutamate 406 and glutamate 413.

It belongs to the class-II aminoacyl-tRNA synthetase family. Homodimer. Mg(2+) is required as a cofactor.

It localises to the cytoplasm. It carries out the reaction tRNA(Lys) + L-lysine + ATP = L-lysyl-tRNA(Lys) + AMP + diphosphate. This chain is Lysine--tRNA ligase, found in Leptospira borgpetersenii serovar Hardjo-bovis (strain JB197).